A 64-amino-acid chain; its full sequence is MAHPKRKISKTRRDKRRTHYKATVAQIATCPITGEAHLYHRAYWHEGKMYYRGQVVIDKQTAVA.

Belongs to the bacterial ribosomal protein bL32 family.

The protein is Large ribosomal subunit protein bL32 of Flavobacterium psychrophilum (strain ATCC 49511 / DSM 21280 / CIP 103535 / JIP02/86).